The sequence spans 297 residues: 4-hydroxy-tetrahydrodipicolinate synthase (297 aa).

Residue threonine 47 participates in pyruvate binding. The Proton donor/acceptor role is filled by tyrosine 136. Residue lysine 165 is the Schiff-base intermediate with substrate of the active site. Isoleucine 206 provides a ligand contact to pyruvate.

Belongs to the DapA family. As to quaternary structure, homotetramer; dimer of dimers.

It localises to the cytoplasm. It carries out the reaction L-aspartate 4-semialdehyde + pyruvate = (2S,4S)-4-hydroxy-2,3,4,5-tetrahydrodipicolinate + H2O + H(+). It participates in amino-acid biosynthesis; L-lysine biosynthesis via DAP pathway; (S)-tetrahydrodipicolinate from L-aspartate: step 3/4. Functionally, catalyzes the condensation of (S)-aspartate-beta-semialdehyde [(S)-ASA] and pyruvate to 4-hydroxy-tetrahydrodipicolinate (HTPA). In Campylobacter concisus (strain 13826), this protein is 4-hydroxy-tetrahydrodipicolinate synthase.